The sequence spans 538 residues: Pentachlorophenol 4-monooxygenase (538 aa).

Residues 16–45 (AVLIVGGGPTGLIAANELLRRGVSCRMIDR) and 288–298 (YRKGNVFLAGD) each bind FAD.

The protein belongs to the PheA/TfdB FAD monooxygenase family. As to quaternary structure, homodimer. The cofactor is FAD.

It catalyses the reaction pentachlorophenol + NADPH + O2 + H(+) = 2,3,5,6-tetrachloro-1,4-benzoquinone + chloride + NADP(+) + H2O. The catalysed reaction is 2,3,5,6-tetrachlorophenol + NADPH + O2 = 2,3,5,6-tetrachlorohydroquinone + NADP(+) + H2O. It functions in the pathway xenobiotic degradation; pentachlorophenol degradation. In terms of biological role, dechlorination of pentachlorophenol to tetrachlorobenzoquinone. Also removes hydrogen and nitro, amino, and cyano groups from benzene ring at the para position in relation to the hydroxyl of phenol. This is Pentachlorophenol 4-monooxygenase (pcpB) from Sphingobium chlorophenolicum.